The chain runs to 402 residues: B3 domain-containing protein LFL1 (402 aa).

Residues Met1–Thr174 are disordered. Positions Ala74 to Ser87 are enriched in low complexity. Positions Ser88–Pro102 are enriched in pro residues. Low complexity-rich tracts occupy residues Ser103–Ser139 and Pro156–Pro169. The segment at residues Leu181–Gly284 is a DNA-binding region (TF-B3). Residues Leu381–Met402 form a disordered region.

Expressed in anthers, pollen grains and young developing embryos.

Its subcellular location is the nucleus. Functionally, transcription repressor involved in flowering time regulation. Represses the flowering activator EHD1 by binding specifically to the DNA sequence 5'-CATGCATG-3 of its promoter. The chain is B3 domain-containing protein LFL1 (LFL1) from Oryza sativa subsp. japonica (Rice).